The primary structure comprises 476 residues: Angiotensinogen (476 aa).

The signal sequence occupies residues 1 to 24; sequence MAPAGVSLRATILCLVAWAGLAAG. Residues Asn-38, Asn-161, Asn-295, and Asn-319 are each glycosylated (N-linked (GlcNAc...) asparagine). A disulfide bridge connects residues Cys-42 and Cys-162.

The protein belongs to the serpin family. Post-translationally, in response to low blood pressure, the enzyme renin/REN cleaves angiotensinogen to produce angiotensin-1. Angiotensin-1 is a substrate of ACE (angiotensin converting enzyme) that removes a dipeptide to yield the physiologically active peptide angiotensin-2. Angiotensin-1 and angiotensin-2 can be further processed to generate angiotensin-3, angiotensin-4. Angiotensin 1-9 is cleaved from angiotensin-1 by ACE2 and can be further processed by ACE to produce angiotensin 1-7, angiotensin 1-5 and angiotensin 1-4. Angiotensin 1-7 has also been proposed to be cleaved from angiotensin-2 by ACE2 or from angiotensin-1 by MME (neprilysin). The disulfide bond is labile. Angiotensinogen is present in the circulation in a near 40:60 ratio with the oxidized disulfide-bonded form, which preferentially interacts with receptor-bound renin.

It is found in the secreted. Essential component of the renin-angiotensin system (RAS), a potent regulator of blood pressure, body fluid and electrolyte homeostasis. Its function is as follows. Acts directly on vascular smooth muscle as a potent vasoconstrictor, affects cardiac contractility and heart rate through its action on the sympathetic nervous system, and alters renal sodium and water absorption through its ability to stimulate the zona glomerulosa cells of the adrenal cortex to synthesize and secrete aldosterone. Acts by binding to angiotensin receptors AGTR1 and AGTR2. Also binds the DEAR/FBXW7-AS1 receptor. Functionally, stimulates aldosterone release. In terms of biological role, is a ligand for the G-protein coupled receptor MAS1. Has vasodilator and antidiuretic effects. Has an antithrombotic effect that involves MAS1-mediated release of nitric oxide from platelets. This chain is Angiotensinogen (AGT), found in Pan troglodytes (Chimpanzee).